The following is a 32-amino-acid chain: Snaclec (32 aa).

In terms of assembly, dimer; disulfide-linked. In terms of tissue distribution, expressed by the venom gland.

The protein resides in the secreted. Its function is as follows. Interferes with one step of hemostasis (modulation of platelet aggregation, or coagulation cascade, for example). This chain is Snaclec, found in Bothrops diporus (Chaco lancehead).